Here is a 339-residue protein sequence, read N- to C-terminus: Anthranilate phosphoribosyltransferase (339 aa).

5-phospho-alpha-D-ribose 1-diphosphate contacts are provided by residues glycine 81, 84-85 (GD), serine 89, 91-94 (NVSS), 109-117 (KHGNRALSS), and alanine 121. Glycine 81 provides a ligand contact to anthranilate. Serine 93 provides a ligand contact to Mg(2+). Asparagine 112 serves as a coordination point for anthranilate. An anthranilate-binding site is contributed by arginine 167. Positions 225 and 226 each coordinate Mg(2+).

The protein belongs to the anthranilate phosphoribosyltransferase family. Homodimer. The cofactor is Mg(2+).

The enzyme catalyses N-(5-phospho-beta-D-ribosyl)anthranilate + diphosphate = 5-phospho-alpha-D-ribose 1-diphosphate + anthranilate. It participates in amino-acid biosynthesis; L-tryptophan biosynthesis; L-tryptophan from chorismate: step 2/5. Functionally, catalyzes the transfer of the phosphoribosyl group of 5-phosphorylribose-1-pyrophosphate (PRPP) to anthranilate to yield N-(5'-phosphoribosyl)-anthranilate (PRA). The chain is Anthranilate phosphoribosyltransferase from Brucella abortus (strain S19).